Reading from the N-terminus, the 692-residue chain is Elongation factor G 2 (692 aa).

The 276-residue stretch at 8–283 (KDVRNIGIMA…GVVNYLPSPL (276 aa)) folds into the tr-type G domain. GTP is bound by residues 17–24 (AHIDAGKT), 81–85 (DTPGH), and 135–138 (NKMD).

It belongs to the TRAFAC class translation factor GTPase superfamily. Classic translation factor GTPase family. EF-G/EF-2 subfamily.

Its subcellular location is the cytoplasm. Its function is as follows. Catalyzes the GTP-dependent ribosomal translocation step during translation elongation. During this step, the ribosome changes from the pre-translocational (PRE) to the post-translocational (POST) state as the newly formed A-site-bound peptidyl-tRNA and P-site-bound deacylated tRNA move to the P and E sites, respectively. Catalyzes the coordinated movement of the two tRNA molecules, the mRNA and conformational changes in the ribosome. This is Elongation factor G 2 from Desulfotalea psychrophila (strain LSv54 / DSM 12343).